A 324-amino-acid chain; its full sequence is MVFSKISQVAHYTPKQVISNDDLSQIMDTSHEWISSRTGIEKRHISTVEMTSDLAIRVAEQLLAGSGYDATALDFIIVATISPDASMPSTAAKVQAAIGATNAFAFDMTAACSGFVFALAMADKLIASGAYQRGLVIGAETLSKIIDWQDRSTAVLFGDGAGGVLLEASEQQHFLAEALHTDGAQGQSLTSGQSSLRSPFSQGQEVNSFLQMDGRAIFDFAIRDVSRSITAIIEQSGLAKEELDYLLLHQANRRILDKMAKKIGMPREKFLENMMHYGNTSAASIPILLSESVQNGQLKLDGSQHILLSGFGGGLTWGSLIVKI.

Catalysis depends on residues cysteine 112 and histidine 249. An ACP-binding region spans residues 250–254 (QANRR). Asparagine 279 is an active-site residue.

The protein belongs to the thiolase-like superfamily. FabH family. In terms of assembly, homodimer.

The protein resides in the cytoplasm. It carries out the reaction malonyl-[ACP] + acetyl-CoA + H(+) = 3-oxobutanoyl-[ACP] + CO2 + CoA. Its pathway is lipid metabolism; fatty acid biosynthesis. Catalyzes the condensation reaction of fatty acid synthesis by the addition to an acyl acceptor of two carbons from malonyl-ACP. Catalyzes the first condensation reaction which initiates fatty acid synthesis and may therefore play a role in governing the total rate of fatty acid production. Possesses both acetoacetyl-ACP synthase and acetyl transacylase activities. Its substrate specificity determines the biosynthesis of branched-chain and/or straight-chain of fatty acids. In Streptococcus equi subsp. equi (strain 4047), this protein is Beta-ketoacyl-[acyl-carrier-protein] synthase III.